The primary structure comprises 106 residues: ATP-dependent Clp protease adapter protein ClpS (106 aa).

Over residues 1 to 13 (MGNNSTWSQSENL) the composition is skewed to polar residues. The interval 1–21 (MGNNSTWSQSENLTADKQKEK) is disordered.

Belongs to the ClpS family. As to quaternary structure, binds to the N-terminal domain of the chaperone ClpA.

In terms of biological role, involved in the modulation of the specificity of the ClpAP-mediated ATP-dependent protein degradation. In Pectobacterium carotovorum subsp. carotovorum (strain PC1), this protein is ATP-dependent Clp protease adapter protein ClpS.